Reading from the N-terminus, the 407-residue chain is Betaine--homocysteine S-methyltransferase 1 (407 aa).

A Hcy-binding domain is found at 11-314; that stretch reads RGILERLNAG…YHIRAIAEEL (304 aa). K40, K93, and K98 each carry N6-succinyllysine. C217 serves as a coordination point for Zn(2+). N6-succinyllysine is present on residues K232 and K241. Zn(2+)-binding residues include C299 and C300. S330 carries the post-translational modification Phosphoserine. An N6-succinyllysine mark is found at K340 and K377.

As to quaternary structure, homotetramer. Requires Zn(2+) as cofactor. In terms of tissue distribution, highly expressed in liver and kidney (at protein level). Expressed at lower levels in testis, lung, cerebellum, skeletal muscle and pancreas (at protein level).

The protein resides in the cytoplasm. It is found in the cytosol. It localises to the nucleus. It carries out the reaction L-homocysteine + glycine betaine = N,N-dimethylglycine + L-methionine. Its pathway is amine and polyamine degradation; betaine degradation; sarcosine from betaine: step 1/2. It functions in the pathway amino-acid biosynthesis; L-methionine biosynthesis via de novo pathway; L-methionine from L-homocysteine (BhmT route): step 1/1. Involved in the regulation of homocysteine metabolism. Converts betaine and homocysteine to dimethylglycine and methionine, respectively. This reaction is also required for the irreversible oxidation of choline. In Rattus norvegicus (Rat), this protein is Betaine--homocysteine S-methyltransferase 1.